Reading from the N-terminus, the 342-residue chain is tRNA N6-adenosine threonylcarbamoyltransferase (342 aa).

The Fe cation site is built by His-112 and His-116. Substrate-binding positions include 134 to 138, Asp-167, Gly-180, and Asn-278; that span reads IVSGG. Asp-306 contributes to the Fe cation binding site.

The protein belongs to the KAE1 / TsaD family. The cofactor is Fe(2+).

It localises to the cytoplasm. The enzyme catalyses L-threonylcarbamoyladenylate + adenosine(37) in tRNA = N(6)-L-threonylcarbamoyladenosine(37) in tRNA + AMP + H(+). Its function is as follows. Required for the formation of a threonylcarbamoyl group on adenosine at position 37 (t(6)A37) in tRNAs that read codons beginning with adenine. Is involved in the transfer of the threonylcarbamoyl moiety of threonylcarbamoyl-AMP (TC-AMP) to the N6 group of A37, together with TsaE and TsaB. TsaD likely plays a direct catalytic role in this reaction. The sequence is that of tRNA N6-adenosine threonylcarbamoyltransferase from Anaplasma phagocytophilum (strain HZ).